The following is a 248-amino-acid chain: Small ribosomal subunit protein uS2 (248 aa).

The protein belongs to the universal ribosomal protein uS2 family.

The protein is Small ribosomal subunit protein uS2 of Janthinobacterium sp. (strain Marseille) (Minibacterium massiliensis).